The sequence spans 273 residues: Ribosomal RNA small subunit methyltransferase A (273 aa).

Residues N19, L21, G46, E67, D92, and N113 each coordinate S-adenosyl-L-methionine.

This sequence belongs to the class I-like SAM-binding methyltransferase superfamily. rRNA adenine N(6)-methyltransferase family. RsmA subfamily.

The protein resides in the cytoplasm. The enzyme catalyses adenosine(1518)/adenosine(1519) in 16S rRNA + 4 S-adenosyl-L-methionine = N(6)-dimethyladenosine(1518)/N(6)-dimethyladenosine(1519) in 16S rRNA + 4 S-adenosyl-L-homocysteine + 4 H(+). In terms of biological role, specifically dimethylates two adjacent adenosines (A1518 and A1519) in the loop of a conserved hairpin near the 3'-end of 16S rRNA in the 30S particle. May play a critical role in biogenesis of 30S subunits. In Hahella chejuensis (strain KCTC 2396), this protein is Ribosomal RNA small subunit methyltransferase A.